Reading from the N-terminus, the 81-residue chain is Putative membrane protein insertion efficiency factor (81 aa).

The protein belongs to the UPF0161 family.

The protein localises to the cell inner membrane. Its function is as follows. Could be involved in insertion of integral membrane proteins into the membrane. The chain is Putative membrane protein insertion efficiency factor from Legionella pneumophila (strain Lens).